The primary structure comprises 341 residues: uncharacterized protein (341 aa).

Residues 315–337 (VAAWFSGIAGGTFLALKLVSLMM) traverse the membrane as a helical segment.

It localises to the cell membrane. This is an uncharacterized protein from Bacillus subtilis (strain 168).